The chain runs to 195 residues: GTP-dependent dephospho-CoA kinase (195 aa).

Positions 49, 50, 68, 127, and 150 each coordinate GTP.

The protein belongs to the GTP-dependent DPCK family.

It catalyses the reaction 3'-dephospho-CoA + GTP = GDP + CoA + H(+). It participates in cofactor biosynthesis; coenzyme A biosynthesis. Functionally, catalyzes the GTP-dependent phosphorylation of the 3'-hydroxyl group of dephosphocoenzyme A to form coenzyme A (CoA). This is GTP-dependent dephospho-CoA kinase from Methanosarcina barkeri (strain Fusaro / DSM 804).